We begin with the raw amino-acid sequence, 123 residues long: uncharacterized protein (123 aa).

The disordered stretch occupies residues 1–28 (MGLGSSKRKEEPPHKSEPKTVGRVKRAG). Residues 7 to 20 (KRKEEPPHKSEPKT) show a composition bias toward basic and acidic residues.

The protein belongs to the TUSC2 family.

This is an uncharacterized protein from Caenorhabditis elegans.